The following is a 442-amino-acid chain: Mimosinase, chloroplastic (442 aa).

The N-terminal 35 residues, 1–35 (MALPSAFLNPFVPSPVTANPRTKFARVGKGFNVSC), are a transit peptide targeting the chloroplast. Tyr103, Arg105, Gly133, Met134, Ser252, and Thr254 together coordinate pyridoxal 5'-phosphate. Residue Lys255 is modified to N6-(pyridoxal phosphate)lysine.

This sequence belongs to the trans-sulfuration enzymes family. Forms homodimers. May form homotetramers from two homodimers. Requires pyridoxal 5'-phosphate as cofactor.

Its subcellular location is the plastid. It localises to the chloroplast. It catalyses the reaction L-mimosine + H2O = 3-hydroxy-4H-pyrid-4-one + pyruvate + NH4(+). It carries out the reaction L,L-cystathionine + H2O = L-homocysteine + pyruvate + NH4(+). The enzyme catalyses an S-substituted L-cysteine + H2O = a thiol + pyruvate + NH4(+). Catalyzes the degradation of mimosine, which is a toxic secondary metabolite found in all Mimosa and Leucaena species. Catalyzes the degradation of cystathionine, but seems to have lower preference toward cystathionine over mimosine. This chain is Mimosinase, chloroplastic, found in Mimosa pudica (Sensitive plant).